A 569-amino-acid polypeptide reads, in one-letter code: Protein THEMIS3 (569 aa).

CABIT regions lie at residues 1–254 (MEQT…ARLD) and 255–523 (RKPR…EERS).

This sequence belongs to the themis family. In terms of tissue distribution, specifically expressed in the intestine.

The protein is Protein THEMIS3 (Themis3) of Mus musculus (Mouse).